A 293-amino-acid chain; its full sequence is 4-hydroxy-tetrahydrodipicolinate synthase (293 aa).

Threonine 47 serves as a coordination point for pyruvate. Tyrosine 136 (proton donor/acceptor) is an active-site residue. Residue lysine 164 is the Schiff-base intermediate with substrate of the active site. Isoleucine 206 contacts pyruvate.

This sequence belongs to the DapA family. In terms of assembly, homotetramer; dimer of dimers.

The protein localises to the cytoplasm. The enzyme catalyses L-aspartate 4-semialdehyde + pyruvate = (2S,4S)-4-hydroxy-2,3,4,5-tetrahydrodipicolinate + H2O + H(+). It functions in the pathway amino-acid biosynthesis; L-lysine biosynthesis via DAP pathway; (S)-tetrahydrodipicolinate from L-aspartate: step 3/4. Functionally, catalyzes the condensation of (S)-aspartate-beta-semialdehyde [(S)-ASA] and pyruvate to 4-hydroxy-tetrahydrodipicolinate (HTPA). The sequence is that of 4-hydroxy-tetrahydrodipicolinate synthase from Listeria monocytogenes serotype 4a (strain HCC23).